The chain runs to 954 residues: Glycine dehydrogenase (decarboxylating) (954 aa).

Lysine 704 is subject to N6-(pyridoxal phosphate)lysine.

This sequence belongs to the GcvP family. The glycine cleavage system is composed of four proteins: P, T, L and H. Requires pyridoxal 5'-phosphate as cofactor.

It carries out the reaction N(6)-[(R)-lipoyl]-L-lysyl-[glycine-cleavage complex H protein] + glycine + H(+) = N(6)-[(R)-S(8)-aminomethyldihydrolipoyl]-L-lysyl-[glycine-cleavage complex H protein] + CO2. Functionally, the glycine cleavage system catalyzes the degradation of glycine. The P protein binds the alpha-amino group of glycine through its pyridoxal phosphate cofactor; CO(2) is released and the remaining methylamine moiety is then transferred to the lipoamide cofactor of the H protein. This chain is Glycine dehydrogenase (decarboxylating), found in Vibrio cholerae serotype O1 (strain ATCC 39541 / Classical Ogawa 395 / O395).